Consider the following 367-residue polypeptide: Peptide chain release factor 2 (367 aa).

An N5-methylglutamine modification is found at Gln254.

The protein belongs to the prokaryotic/mitochondrial release factor family. Methylated by PrmC. Methylation increases the termination efficiency of RF2.

The protein resides in the cytoplasm. Functionally, peptide chain release factor 2 directs the termination of translation in response to the peptide chain termination codons UGA and UAA. The chain is Peptide chain release factor 2 from Neisseria meningitidis serogroup A / serotype 4A (strain DSM 15465 / Z2491).